A 225-amino-acid chain; its full sequence is Uracil-DNA glycosylase (225 aa).

Catalysis depends on D65, which acts as the Proton acceptor.

The protein belongs to the uracil-DNA glycosylase (UDG) superfamily. UNG family.

It localises to the cytoplasm. It carries out the reaction Hydrolyzes single-stranded DNA or mismatched double-stranded DNA and polynucleotides, releasing free uracil.. Excises uracil residues from the DNA which can arise as a result of misincorporation of dUMP residues by DNA polymerase or due to deamination of cytosine. This chain is Uracil-DNA glycosylase, found in Alkaliphilus oremlandii (strain OhILAs) (Clostridium oremlandii (strain OhILAs)).